Here is a 459-residue protein sequence, read N- to C-terminus: Glycosyl hydrolase family 109 protein 1 (459 aa).

A signal peptide (tat-type signal) is located at residues 1 to 31 (MHNIHRRHFLKAAGAVTAGLVTANIALNANA). NAD(+)-binding positions include 64-65 (ER), aspartate 86, 135-138 (WEWH), 155-156 (EV), and asparagine 184. Substrate is bound by residues tyrosine 213, arginine 232, 244-247 (YPTH), and tyrosine 326. Residue tyrosine 244 participates in NAD(+) binding.

It belongs to the Gfo/Idh/MocA family. Glycosyl hydrolase 109 subfamily. NAD(+) is required as a cofactor. Post-translationally, predicted to be exported by the Tat system. The position of the signal peptide cleavage has not been experimentally proven.

Functionally, glycosidase. The protein is Glycosyl hydrolase family 109 protein 1 of Shewanella sp. (strain ANA-3).